A 120-amino-acid polypeptide reads, in one-letter code: Large ribosomal subunit protein uL29A (120 aa).

2 positions are modified to phosphoserine: S13 and S50.

Belongs to the universal ribosomal protein uL29 family. As to quaternary structure, component of the large ribosomal subunit (LSU). Mature yeast ribosomes consist of a small (40S) and a large (60S) subunit. The 40S small subunit contains 1 molecule of ribosomal RNA (18S rRNA) and 33 different proteins (encoded by 57 genes). The large 60S subunit contains 3 rRNA molecules (25S, 5.8S and 5S rRNA) and 46 different proteins (encoded by 81 genes). uL29 is associated with the polypeptide exit tunnel.

The protein localises to the cytoplasm. Its function is as follows. Component of the ribosome, a large ribonucleoprotein complex responsible for the synthesis of proteins in the cell. The small ribosomal subunit (SSU) binds messenger RNAs (mRNAs) and translates the encoded message by selecting cognate aminoacyl-transfer RNA (tRNA) molecules. The large subunit (LSU) contains the ribosomal catalytic site termed the peptidyl transferase center (PTC), which catalyzes the formation of peptide bonds, thereby polymerizing the amino acids delivered by tRNAs into a polypeptide chain. The nascent polypeptides leave the ribosome through a tunnel in the LSU and interact with protein factors that function in enzymatic processing, targeting, and the membrane insertion of nascent chains at the exit of the ribosomal tunnel. The polypeptide is Large ribosomal subunit protein uL29A (Saccharomyces cerevisiae (strain ATCC 204508 / S288c) (Baker's yeast)).